A 121-amino-acid chain; its full sequence is Small ribosomal subunit protein uS13 (121 aa).

The tract at residues 92 to 121 (HRMGLPCRGQKTKTNARTRKGPRRGAARRK) is disordered. Residues 101-121 (QKTKTNARTRKGPRRGAARRK) are compositionally biased toward basic residues.

This sequence belongs to the universal ribosomal protein uS13 family. Part of the 30S ribosomal subunit. Forms a loose heterodimer with protein S19. Forms two bridges to the 50S subunit in the 70S ribosome.

Located at the top of the head of the 30S subunit, it contacts several helices of the 16S rRNA. In the 70S ribosome it contacts the 23S rRNA (bridge B1a) and protein L5 of the 50S subunit (bridge B1b), connecting the 2 subunits; these bridges are implicated in subunit movement. Contacts the tRNAs in the A and P-sites. This is Small ribosomal subunit protein uS13 from Desulfotalea psychrophila (strain LSv54 / DSM 12343).